Consider the following 443-residue polypeptide: D(2) dopamine receptor (443 aa).

The Extracellular portion of the chain corresponds to 1–37 (MDPLNLSWYDDDLERQNWSRPFNGSDGKADRPHYNYY). Residues Asn-5, Asn-17, and Asn-23 are each glycosylated (N-linked (GlcNAc...) asparagine). Residues 38–60 (ATLLTLLIAVIVFGNVLVCMAVS) traverse the membrane as a helical segment. Topologically, residues 61–70 (REKALQTTTN) are cytoplasmic. A helical transmembrane segment spans residues 71-93 (YLIVSLAVADLLVATLVMPWVVY). The Extracellular portion of the chain corresponds to 94–108 (LEVVGEWKFSKIHCD). The cysteines at positions 107 and 182 are disulfide-linked. The helical transmembrane segment at 109–130 (IFVTLDVMMCTASILNLCAISI) threads the bilayer. Topologically, residues 131-151 (DRYTAVAMPMLYNTRYSSKRR) are cytoplasmic. A helical membrane pass occupies residues 152 to 172 (VTVMIAIVWVLSFTISCPLLF). Topologically, residues 173–188 (GLNNADQNECIIANPA) are extracellular. A helical transmembrane segment spans residues 189-213 (FVVYSSIVSFYVPFIVTLLVYIKIY). Residues 211-373 (KIYIVLRRRR…SQQKEKKATQ (163 aa)) are interaction with PPP1R9B. At 214 to 373 (IVLRRRRKRV…SQQKEKKATQ (160 aa)) the chain is on the cytoplasmic side. Positions 281 to 332 (MEMLSSTSPPERTRYSPIPPSHHQLTLPDPSHHGLHSTPDSPAKPEKNGHAK) are disordered. A helical membrane pass occupies residues 374-395 (MLAIVLGVFIICWLPFFITHIL). Residues 396-409 (NIHCDCNIPPVLYS) are Extracellular-facing. Cys-399 and Cys-401 are oxidised to a cystine. A helical transmembrane segment spans residues 410 to 431 (AFTWLGYVNSAVNPIIYTTFNI). Over 432–443 (EFRKAFLKILHC) the chain is Cytoplasmic. Cys-443 carries S-palmitoyl cysteine lipidation.

Belongs to the G-protein coupled receptor 1 family. Forms homo- and heterooligomers with DRD4. The interaction with DRD4 may modulate agonist-induced downstream signaling. Interacts with CADPS and CADPS2. Interacts with GPRASP1, PPP1R9B and CLIC6. Interacts with ARRB2. Interacts with HTR2A. Interacts with DRD1. Interacts with KCNA2. In terms of processing, palmitoylated. Palmitoylation which is required for proper localization to the plasma membrane and stability of the receptor could be carried on by ZDHHC4, ZDHHC3 and ZDHHC8.

The protein resides in the cell membrane. Its subcellular location is the golgi apparatus membrane. Its function is as follows. Dopamine receptor whose activity is mediated by G proteins which inhibit adenylyl cyclase. Positively regulates postnatal regression of retinal hyaloid vessels via suppression of VEGFR2/KDR activity, downstream of OPN5. This Chlorocebus aethiops (Green monkey) protein is D(2) dopamine receptor (DRD2).